Reading from the N-terminus, the 334-residue chain is Magnesium-chelatase 38 kDa subunit (334 aa).

Position 36-43 (36-43 (GDRGTGKS)) interacts with ATP.

This sequence belongs to the Mg-chelatase subunits D/I family.

The catalysed reaction is protoporphyrin IX + Mg(2+) + ATP + H2O = Mg-protoporphyrin IX + ADP + phosphate + 3 H(+). It functions in the pathway porphyrin-containing compound metabolism; bacteriochlorophyll biosynthesis. In terms of biological role, involved in bacteriochlorophyll biosynthesis; introduces a magnesium ion into protoporphyrin IX to yield Mg-protoporphyrin IX. The polypeptide is Magnesium-chelatase 38 kDa subunit (bchI) (Cereibacter sphaeroides (strain ATCC 17023 / DSM 158 / JCM 6121 / CCUG 31486 / LMG 2827 / NBRC 12203 / NCIMB 8253 / ATH 2.4.1.) (Rhodobacter sphaeroides)).